A 338-amino-acid chain; its full sequence is Lipoate-protein ligase A (338 aa).

A BPL/LPL catalytic domain is found at 29-216 (PATQRVLFLW…AFFVHYGERV (188 aa)). ATP contacts are provided by residues Arg-71, 76–79 (GAVF), and Lys-134. Lys-134 is a (R)-lipoate binding site.

This sequence belongs to the LplA family. In terms of assembly, monomer.

The protein resides in the cytoplasm. It carries out the reaction L-lysyl-[lipoyl-carrier protein] + (R)-lipoate + ATP = N(6)-[(R)-lipoyl]-L-lysyl-[lipoyl-carrier protein] + AMP + diphosphate + H(+). It participates in protein modification; protein lipoylation via exogenous pathway; protein N(6)-(lipoyl)lysine from lipoate: step 1/2. Its pathway is protein modification; protein lipoylation via exogenous pathway; protein N(6)-(lipoyl)lysine from lipoate: step 2/2. Functionally, catalyzes both the ATP-dependent activation of exogenously supplied lipoate to lipoyl-AMP and the transfer of the activated lipoyl onto the lipoyl domains of lipoate-dependent enzymes. This chain is Lipoate-protein ligase A, found in Salmonella newport (strain SL254).